The chain runs to 433 residues: Enolase (433 aa).

Positions 37 to 59 (RAAVPSGASTGEHEAVELRDGDK) are disordered. Residues 47–59 (GEHEAVELRDGDK) are compositionally biased toward basic and acidic residues. (2R)-2-phosphoglycerate is bound at residue glutamine 166. The active-site Proton donor is the glutamate 208. Residues aspartate 245, glutamate 291, and aspartate 318 each coordinate Mg(2+). Positions 343, 372, 373, and 394 each coordinate (2R)-2-phosphoglycerate. The active-site Proton acceptor is lysine 343.

This sequence belongs to the enolase family. The cofactor is Mg(2+).

It localises to the cytoplasm. The protein resides in the secreted. It is found in the cell surface. It catalyses the reaction (2R)-2-phosphoglycerate = phosphoenolpyruvate + H2O. Its pathway is carbohydrate degradation; glycolysis; pyruvate from D-glyceraldehyde 3-phosphate: step 4/5. Functionally, catalyzes the reversible conversion of 2-phosphoglycerate (2-PG) into phosphoenolpyruvate (PEP). It is essential for the degradation of carbohydrates via glycolysis. The protein is Enolase of Leptospira biflexa serovar Patoc (strain Patoc 1 / Ames).